The chain runs to 212 residues: Glutathione S-transferase (212 aa).

The GST N-terminal domain maps to 1–82 (MGMKLHGPAM…YIAHTYADKG (82 aa)). Glutathione is bound by residues serine 11, 12–13 (PA), 40–41 (HK), 53–54 (QV), and 66–67 (ES). A GST C-terminal domain is found at 89-212 (DPKKMAIMSV…AWSKAIEYKQ (124 aa)).

The protein belongs to the GST superfamily. Phi family.

The catalysed reaction is RX + glutathione = an S-substituted glutathione + a halide anion + H(+). Conjugation of reduced glutathione to a wide number of exogenous and endogenous hydrophobic electrophiles. The sequence is that of Glutathione S-transferase from Hyoscyamus muticus (Egyptian henbane).